A 143-amino-acid chain; its full sequence is Transcriptional regulator MraZ (143 aa).

SpoVT-AbrB domains are found at residues 5–47 (TFTP…PRNV) and 76–119 (ADEQ…NAES).

The protein belongs to the MraZ family. Forms oligomers.

It is found in the cytoplasm. Its subcellular location is the nucleoid. The polypeptide is Transcriptional regulator MraZ (Corynebacterium kroppenstedtii (strain DSM 44385 / JCM 11950 / CIP 105744 / CCUG 35717)).